A 463-amino-acid polypeptide reads, in one-letter code: Ribosomal protein uS12 methylthiotransferase RimO (463 aa).

The region spanning 15-130 (PKVGMVSLGC…VMQAVHSHLP (116 aa)) is the MTTase N-terminal domain. Residues Cys24, Cys60, Cys89, Cys161, Cys165, and Cys168 each coordinate [4Fe-4S] cluster. A Radical SAM core domain is found at 147–392 (LTPRHYAYLK…MEVAEEVSAA (246 aa)). One can recognise a TRAM domain in the interval 395–463 (ARKIGKTLKV…ADGHDLWGEV (69 aa)).

This sequence belongs to the methylthiotransferase family. RimO subfamily. The cofactor is [4Fe-4S] cluster.

It is found in the cytoplasm. The enzyme catalyses L-aspartate(89)-[ribosomal protein uS12]-hydrogen + (sulfur carrier)-SH + AH2 + 2 S-adenosyl-L-methionine = 3-methylsulfanyl-L-aspartate(89)-[ribosomal protein uS12]-hydrogen + (sulfur carrier)-H + 5'-deoxyadenosine + L-methionine + A + S-adenosyl-L-homocysteine + 2 H(+). Functionally, catalyzes the methylthiolation of an aspartic acid residue of ribosomal protein uS12. The chain is Ribosomal protein uS12 methylthiotransferase RimO from Burkholderia mallei (strain NCTC 10229).